A 431-amino-acid chain; its full sequence is Keratin, type I cytoskeletal 20 (431 aa).

Residues 1 to 23 (MDFSRQSFHRSLSSSSQGPALSM) form a disordered region. Residues 1 to 76 (MDFSRQSFHR…SNGSDLFGGN (76 aa)) form a head region. Ser-13 bears the Phosphoserine; by MAPKAPK2, MAPKAPK3 and PKC mark. Residues Ser-16 and Ser-26 each carry the phosphoserine modification. Residues 77–112 (GKLAMQNLNDRLANYLEKVRSLEQSNSRLEAQIKQW) are coil 1A. An IF rod domain is found at 77-388 (GKLAMQNLND…RLLEGEDIKT (312 aa)). Positions 113-130 (YETNAPSTIRDYSSYYAQ) are linker 1. The tract at residues 131–222 (IKELQNQVKD…KEHQEEVEVL (92 aa)) is coil 1B. Positions 223–245 (RRQLGNNVNVEVDAAPGLNLGEI) are linker 12. The interval 246–384 (MNEMRQRYEV…ATYRRLLEGE (139 aa)) is coil 2. The segment at 385 to 431 (DIKTTEYQLSTLEMKDIKKTRKIKTVVEEVVDGKVVSSEVKEIEESV) is tail.

The protein belongs to the intermediate filament family. In terms of assembly, heterotetramer of two type I and two type II keratins. Associates with KRT8. Post-translationally, hyperphosphorylation at Ser-13 occurs during the early stages of apoptosis but becomes less prominent during the later stages. Phosphorylation at Ser-13 also increases in response to stress brought on by cell injury. In terms of processing, proteolytically cleaved by caspases during apoptosis. Cleavage occurs at Asp-235. In terms of tissue distribution, expressed at low levels in the more differentiated suprabasal regions of the small intestine, and at higher levels in the colon, mainly in the upper region and in scattered cells throughout the remaining epithelium. Also expressed in epithelial cells of bladder, ileum and stomach and at lower levels in pancreas and earskin. The phosphorylated form is nearly exclusively expressed in goblet cells of the small intestine and in the lumen-proximal cells of the colon (at protein level). Also expressed in jejunum and duodenum.

In terms of biological role, plays a significant role in maintaining keratin filament organization in intestinal epithelia. When phosphorylated, plays a role in the secretion of mucin in the small intestine. In Mus musculus (Mouse), this protein is Keratin, type I cytoskeletal 20.